The primary structure comprises 92 residues: Putative defensin-like protein 251 (92 aa).

The first 27 residues, 1 to 27, serve as a signal peptide directing secretion; the sequence is MRCVTSFVVFCILMFFVLNIFTVEVKA. 4 disulfide bridges follow: Cys-34–Cys-90, Cys-45–Cys-69, Cys-53–Cys-82, and Cys-67–Cys-84.

It belongs to the DEFL family.

It localises to the secreted. This is Putative defensin-like protein 251 (SCRL12) from Arabidopsis thaliana (Mouse-ear cress).